The sequence spans 402 residues: Argininosuccinate synthase (402 aa).

ATP is bound by residues 10-18 and A37; that span reads AYSGGLDTS. 2 residues coordinate L-citrulline: Y88 and S93. G118 contributes to the ATP binding site. Residues T120, N124, and D125 each coordinate L-aspartate. Residue N124 participates in L-citrulline binding. L-citrulline contacts are provided by R128, S179, S188, E264, and Y276.

Belongs to the argininosuccinate synthase family. Type 1 subfamily. Homotetramer.

Its subcellular location is the cytoplasm. The enzyme catalyses L-citrulline + L-aspartate + ATP = 2-(N(omega)-L-arginino)succinate + AMP + diphosphate + H(+). The protein operates within amino-acid biosynthesis; L-arginine biosynthesis; L-arginine from L-ornithine and carbamoyl phosphate: step 2/3. The protein is Argininosuccinate synthase of Alkalilimnicola ehrlichii (strain ATCC BAA-1101 / DSM 17681 / MLHE-1).